Here is a 394-residue protein sequence, read N- to C-terminus: Cysteine desulfurase IscS (394 aa).

Pyridoxal 5'-phosphate is bound by residues 72–73 (GT), Asn152, Gln180, and 200–202 (SAH). Lys203 is subject to N6-(pyridoxal phosphate)lysine. Residue Thr238 coordinates pyridoxal 5'-phosphate. Cys326 acts as the Cysteine persulfide intermediate in catalysis. Cys326 contributes to the [2Fe-2S] cluster binding site.

The protein belongs to the class-V pyridoxal-phosphate-dependent aminotransferase family. NifS/IscS subfamily. Homodimer. Forms a heterotetramer with IscU, interacts with other sulfur acceptors. The cofactor is pyridoxal 5'-phosphate.

The protein resides in the cytoplasm. The enzyme catalyses (sulfur carrier)-H + L-cysteine = (sulfur carrier)-SH + L-alanine. It participates in cofactor biosynthesis; iron-sulfur cluster biosynthesis. Master enzyme that delivers sulfur to a number of partners involved in Fe-S cluster assembly, tRNA modification or cofactor biosynthesis. Catalyzes the removal of elemental sulfur atoms from cysteine to produce alanine. Functions as a sulfur delivery protein for Fe-S cluster synthesis onto IscU, an Fe-S scaffold assembly protein, as well as other S acceptor proteins. This is Cysteine desulfurase IscS from Dictyoglomus turgidum (strain DSM 6724 / Z-1310).